Reading from the N-terminus, the 476-residue chain is Aspartyl/glutamyl-tRNA(Asn/Gln) amidotransferase subunit B (476 aa).

Belongs to the GatB/GatE family. GatB subfamily. In terms of assembly, heterotrimer of A, B and C subunits.

It carries out the reaction L-glutamyl-tRNA(Gln) + L-glutamine + ATP + H2O = L-glutaminyl-tRNA(Gln) + L-glutamate + ADP + phosphate + H(+). The enzyme catalyses L-aspartyl-tRNA(Asn) + L-glutamine + ATP + H2O = L-asparaginyl-tRNA(Asn) + L-glutamate + ADP + phosphate + 2 H(+). Its function is as follows. Allows the formation of correctly charged Asn-tRNA(Asn) or Gln-tRNA(Gln) through the transamidation of misacylated Asp-tRNA(Asn) or Glu-tRNA(Gln) in organisms which lack either or both of asparaginyl-tRNA or glutaminyl-tRNA synthetases. The reaction takes place in the presence of glutamine and ATP through an activated phospho-Asp-tRNA(Asn) or phospho-Glu-tRNA(Gln). In Lactobacillus delbrueckii subsp. bulgaricus (strain ATCC 11842 / DSM 20081 / BCRC 10696 / JCM 1002 / NBRC 13953 / NCIMB 11778 / NCTC 12712 / WDCM 00102 / Lb 14), this protein is Aspartyl/glutamyl-tRNA(Asn/Gln) amidotransferase subunit B.